A 206-amino-acid chain; its full sequence is Large ribosomal subunit protein bL9 (206 aa).

Positions 182–206 (FAENQQKALAKEMNDNDANSINEEA) are disordered. The span at 197–206 (NDANSINEEA) shows a compositional bias: polar residues.

The protein belongs to the bacterial ribosomal protein bL9 family.

In terms of biological role, binds to the 23S rRNA. The sequence is that of Large ribosomal subunit protein bL9 from Bartonella henselae (strain ATCC 49882 / DSM 28221 / CCUG 30454 / Houston 1) (Rochalimaea henselae).